The chain runs to 630 residues: Mesothelin (630 aa).

The first 36 residues, 1 to 36, serve as a signal peptide directing secretion; sequence MALPTARPLLGSCGTPALGSLLFLLFSLGWVQPSRT. The N-linked (GlcNAc...) asparagine glycan is linked to Asn-57. A Phosphoserine; by FAM20C modification is found at Ser-200. The interval 262-286 is required for megakaryocyte-potentiating factor activity; it reads SIPQGIVAAWRQRSSRDPSWRQPER. The cysteines at positions 302 and 326 are disulfide-linked. 3 N-linked (GlcNAc...) asparagine glycosylation sites follow: Asn-388, Asn-496, and Asn-523. Ser-606 carries the GPI-anchor amidated serine lipid modification. Residues 607–630 constitute a propeptide, removed in mature form; sequence GTPCLLGPGPVLTVLALLLASTLA.

Belongs to the mesothelin family. Interacts with MUC16. Both MPF and the cleaved form of mesothelin are N-glycosylated. In terms of processing, proteolytically cleaved by a furin-like convertase to generate megakaryocyte-potentiating factor (MPF), and the cleaved form of mesothelin. As to expression, expressed in lung. Expressed at low levels in heart, placenta and kidney. Expressed in mesothelial cells. Highly expressed in mesotheliomas, ovarian cancers, and some squamous cell carcinomas (at protein level).

The protein resides in the cell membrane. It localises to the golgi apparatus. The protein localises to the secreted. Functionally, membrane-anchored forms may play a role in cellular adhesion. In terms of biological role, megakaryocyte-potentiating factor (MPF) potentiates megakaryocyte colony formation in vitro. In Homo sapiens (Human), this protein is Mesothelin (MSLN).